We begin with the raw amino-acid sequence, 556 residues long: Tripartite motif-containing protein 16 (556 aa).

The tract at residues 1–60 (MAELDLIAPGPLTGVTAHPLAPLGPDPVSAIPVEKEDADPLSKSGEETQEQGHDPAELGA) is disordered. Residues 33–56 (VEKEDADPLSKSGEETQEQGHDPA) show a composition bias toward basic and acidic residues. B box-type zinc fingers lie at residues 64–113 (EDQI…LTEP) and 117–156 (QDLR…STVS). Serine 107 is subject to Phosphoserine. Coiled coils occupy residues 163 to 266 (NKEV…RLAA) and 312 to 332 (NLIQ…REEE). Position 195 is a phosphoserine (serine 195). The 199-residue stretch at 347-545 (YRTSKPEPRT…RIVDLGEEPE (199 aa)) folds into the B30.2/SPRY domain.

The protein belongs to the TRIM/RBCC family. Homodimerizes via its coiled-coil domain. Heterodimerizes with MID1, TRIM24 and PML. Interacts with Galectin-3/LGALS3 in a ULK1-dependent manner; this interaction mediates autophagy of damage endomembranes. Interacts with BECN1. Interacts with ATG16L1. Interacts with p62/SQSTM and LC3B/MAP1LC3B. Phosphorylated by ULK1. In terms of processing, auto-ubiquitinates via its B-Boxes. Widely expressed. Expressed in basal keratinocytes.

It localises to the cytoplasm. It carries out the reaction S-ubiquitinyl-[E2 ubiquitin-conjugating enzyme]-L-cysteine + [acceptor protein]-L-lysine = [E2 ubiquitin-conjugating enzyme]-L-cysteine + N(6)-ubiquitinyl-[acceptor protein]-L-lysine.. E3 ubiquitin ligase that plays an essential role in the organization of autophagic response and ubiquitination upon lysosomal and phagosomal damages. Plays a role in the stress-induced biogenesis and degradation of protein aggresomes by regulating the p62-KEAP1-NRF2 signaling and particularly by modulating the ubiquitination levels and thus stability of NRF2. Acts as a scaffold protein and facilitates autophagic degradation of protein aggregates by interacting with p62/SQSTM, ATG16L1 and LC3B/MAP1LC3B. In turn, protects the cell against oxidative stress-induced cell death as a consequence of endomembrane damage. The polypeptide is Tripartite motif-containing protein 16 (Trim16) (Mus musculus (Mouse)).